Consider the following 30-residue polypeptide: Thylakoid lumenal 13.3 kDa protein (30 aa).

Its subcellular location is the plastid. It is found in the chloroplast thylakoid lumen. The protein is Thylakoid lumenal 13.3 kDa protein of Spinacia oleracea (Spinach).